Here is a 65-residue protein sequence, read N- to C-terminus: Large ribosomal subunit protein bL35 (65 aa).

Positions 1 to 23 are disordered; the sequence is MPKIKTNRGAAKRFKKTGTGKVK. The span at 10–23 shows a compositional bias: basic residues; that stretch reads AAKRFKKTGTGKVK.

This sequence belongs to the bacterial ribosomal protein bL35 family.

The chain is Large ribosomal subunit protein bL35 from Trichlorobacter lovleyi (strain ATCC BAA-1151 / DSM 17278 / SZ) (Geobacter lovleyi).